Reading from the N-terminus, the 302-residue chain is Dihydroorotate dehydrogenase B (NAD(+)), catalytic subunit (302 aa).

FMN contacts are provided by residues Ser20 and 44 to 45; that span reads KG. Substrate is bound by residues Lys44 and 68 to 72; that span reads NSVGL. FMN-binding residues include Asn98 and Asn125. Residue Asn125 coordinates substrate. The Nucleophile role is filled by Cys128. Lys163 and Ile189 together coordinate FMN. 190 to 191 contributes to the substrate binding site; the sequence is NT. Residues Gly215, 241–242, and 263–264 each bind FMN; these read GG and GT.

The protein belongs to the dihydroorotate dehydrogenase family. Type 1 subfamily. In terms of assembly, heterotetramer of 2 PyrK and 2 PyrD type B subunits. FMN serves as cofactor.

It localises to the cytoplasm. It carries out the reaction (S)-dihydroorotate + NAD(+) = orotate + NADH + H(+). Its pathway is pyrimidine metabolism; UMP biosynthesis via de novo pathway; orotate from (S)-dihydroorotate (NAD(+) route): step 1/1. In terms of biological role, catalyzes the conversion of dihydroorotate to orotate with NAD(+) as electron acceptor. This Thermoanaerobacter sp. (strain X514) protein is Dihydroorotate dehydrogenase B (NAD(+)), catalytic subunit (pyrD).